We begin with the raw amino-acid sequence, 325 residues long: 2-dehydro-3-deoxygluconokinase (325 aa).

Substrate is bound by residues 49-53, Tyr105, 121-123, and Arg181; these read GSEAN and YYR. Residues 179-181, 240-245, and 269-272 contribute to the ATP site; these read NIR, KLGAEG, and GAGD. Substrate contacts are provided by Asp272 and Asp308. Asp272 functions as the Proton acceptor in the catalytic mechanism.

Belongs to the carbohydrate kinase PfkB family. In terms of assembly, homohexamer; trimer of dimers.

The enzyme catalyses 2-dehydro-3-deoxy-D-gluconate + ATP = 2-dehydro-3-deoxy-6-phospho-D-gluconate + ADP + H(+). Its pathway is carbohydrate acid metabolism; 2-dehydro-3-deoxy-D-gluconate degradation; D-glyceraldehyde 3-phosphate and pyruvate from 2-dehydro-3-deoxy-D-gluconate: step 1/2. Involved in the degradation of glucose via the semi-phosphorylative Entner-Doudoroff pathway. Catalyzes the phosphorylation of 2-keto-3-deoxygluconate (KDG) yielding 2-keto-3-deoxy-6-phosphogluconate (KDPG). In Thermoproteus tenax, this protein is 2-dehydro-3-deoxygluconokinase (kdgK).